The following is a 183-amino-acid chain: NAD(P)H-quinone oxidoreductase subunit I, chloroplastic (183 aa).

4Fe-4S ferredoxin-type domains follow at residues 55-84 (GRIHFEFDKCIACEVCVRVCPINLPVVDWE) and 95-124 (KNYSIDFGVCIFCGNCVEYCPTNCLSMTEE). Positions 64, 67, 70, 74, 104, 107, 110, and 114 each coordinate [4Fe-4S] cluster.

This sequence belongs to the complex I 23 kDa subunit family. In terms of assembly, NDH is composed of at least 16 different subunits, 5 of which are encoded in the nucleus. [4Fe-4S] cluster is required as a cofactor.

It is found in the plastid. The protein resides in the chloroplast thylakoid membrane. The enzyme catalyses a plastoquinone + NADH + (n+1) H(+)(in) = a plastoquinol + NAD(+) + n H(+)(out). It carries out the reaction a plastoquinone + NADPH + (n+1) H(+)(in) = a plastoquinol + NADP(+) + n H(+)(out). In terms of biological role, NDH shuttles electrons from NAD(P)H:plastoquinone, via FMN and iron-sulfur (Fe-S) centers, to quinones in the photosynthetic chain and possibly in a chloroplast respiratory chain. The immediate electron acceptor for the enzyme in this species is believed to be plastoquinone. Couples the redox reaction to proton translocation, and thus conserves the redox energy in a proton gradient. The chain is NAD(P)H-quinone oxidoreductase subunit I, chloroplastic from Marchantia polymorpha (Common liverwort).